Consider the following 239-residue polypeptide: Phosducin-like protein 3 (239 aa).

Methionine 1 bears the N-acetylmethionine mark. Residues 32 to 180 (EAEEEQRILQ…EGDIKAQFIG (149 aa)) enclose the Phosducin domain. Residue serine 43 is modified to Phosphoserine. The thioredoxin fold stretch occupies residues 91–239 (FGEVLEISGK…MKRDSDSEGD (149 aa)). Interaction with XIAP regions lie at residues 97 to 99 (ISG) and 153 to 155 (TCI). Serine 234 and serine 236 each carry phosphoserine.

The protein belongs to the phosducin family. As to quaternary structure, interacts (via thioredoxin fold region) with KDR/VEGFR2 (via juxtamembrane domain). Forms ternary complexes with the chaperonin CCT complex and actin substrate, leading to inhibition of actin folding. Interacts with XIAP (via BIR 3 and RING domain). Interacts with HSP90AA1 and HSP90AB1. Post-translationally, N-terminal methionine acetylation destabilizes the protein. Expressed in endothelial cells (at protein level). Expressed in all tissues examined including spleen, thymus, prostate, testis, ovary, small intestine and colon.

It localises to the cytoplasm. The protein localises to the perinuclear region. The protein resides in the endoplasmic reticulum. Its function is as follows. Acts as a chaperone for the angiogenic VEGF receptor KDR/VEGFR2, increasing its abundance by inhibiting its ubiquitination and degradation. Inhibits the folding activity of the chaperonin-containing T-complex (CCT) which leads to inhibition of cytoskeletal actin folding. Acts as a chaperone during heat shock alongside HSP90 and HSP40/70 chaperone complexes. Modulates the activation of caspases during apoptosis. In Homo sapiens (Human), this protein is Phosducin-like protein 3 (PDCL3).